The chain runs to 255 residues: Hydroxyacylglutathione hydrolase (255 aa).

Zn(2+)-binding residues include H56, H58, D60, H61, H114, D133, and H171.

The protein belongs to the metallo-beta-lactamase superfamily. Glyoxalase II family. Monomer. Zn(2+) is required as a cofactor.

It catalyses the reaction an S-(2-hydroxyacyl)glutathione + H2O = a 2-hydroxy carboxylate + glutathione + H(+). Its pathway is secondary metabolite metabolism; methylglyoxal degradation; (R)-lactate from methylglyoxal: step 2/2. In terms of biological role, thiolesterase that catalyzes the hydrolysis of S-D-lactoyl-glutathione to form glutathione and D-lactic acid. This is Hydroxyacylglutathione hydrolase from Mesorhizobium japonicum (strain LMG 29417 / CECT 9101 / MAFF 303099) (Mesorhizobium loti (strain MAFF 303099)).